A 97-amino-acid polypeptide reads, in one-letter code: Large ribosomal subunit protein eL21 (97 aa).

Residues 1–24 show a composition bias toward basic residues; the sequence is MVQKAHSFRRKTRKKLRKHPRRRG. The disordered stretch occupies residues 1-25; that stretch reads MVQKAHSFRRKTRKKLRKHPRRRGL.

This sequence belongs to the eukaryotic ribosomal protein eL21 family.

This is Large ribosomal subunit protein eL21 (rpl21e) from Pyrococcus abyssi (strain GE5 / Orsay).